Reading from the N-terminus, the 435-residue chain is Nucleoredoxin (435 aa).

Serine 2 is subject to N-acetylserine. One can recognise a Thioredoxin domain in the interval 167–321 (PKPFREVIAG…VLELSDSNAV (155 aa)).

The protein belongs to the nucleoredoxin family. Associates with the phosphatase 2A holoenzyme. Interacts with PPP2CA; the interaction is direct. Interacts with DVL1 (via PDZ domain); the interaction is direct and regulated by oxidative stress.

It localises to the cytoplasm. It is found in the cytosol. The protein localises to the nucleus. The enzyme catalyses [protein]-dithiol + NAD(+) = [protein]-disulfide + NADH + H(+). It carries out the reaction [protein]-dithiol + NADP(+) = [protein]-disulfide + NADPH + H(+). Its function is as follows. Functions as a redox-dependent negative regulator of the Wnt signaling pathway, possibly by preventing ubiquitination of DVL3 by the BCR(KLHL12) complex. May also function as a transcriptional regulator act as a regulator of protein phosphatase 2A (PP2A). This is Nucleoredoxin (NXN) from Bos taurus (Bovine).